Consider the following 724-residue polypeptide: Solute carrier organic anion transporter family member 4C1 (724 aa).

The Cytoplasmic segment spans residues 1-105 (MKSAKGIENL…QCLQRCNTPG (105 aa)). Residues Ser15, Ser16, Ser24, Ser26, and Ser28 each carry the phosphoserine modification. Residues 30–71 (IEVSALSSDPQRENSQPQELQKPQEPQKSPEPSLPSAPPNVS) form a disordered region. Positions 44 to 60 (SQPQELQKPQEPQKSPE) are enriched in low complexity. A helical membrane pass occupies residues 106–126 (GFLLHYCLLAVTQGIVVNGLV). At 127–145 (NISISTVEKRYEMKSSLTG) the chain is on the extracellular side. Residues 146-166 (LISSSYDISFCLLSLFVSFFG) form a helical membrane-spanning segment. The Cytoplasmic portion of the chain corresponds to 167–172 (ERGHKP). A helical membrane pass occupies residues 173–197 (RWLAFAAFMIGLGALVFSLPQFFSG). Residues 198–223 (EYKLGSLFEDTCVTTRNSTSCTSSTS) are Extracellular-facing. The chain crosses the membrane as a helical span at residues 224–254 (SLSNYLYVFILGQLLLGAGGTPLYTLGTAFL). Residues 255 to 274 (DDSVPTHKSSLYIGTGYAMS) are Cytoplasmic-facing. A helical membrane pass occupies residues 275–295 (ILGPAIGYVLGGQLLTIYIDV). The Extracellular portion of the chain corresponds to 296-311 (AMGESTDVTEDDPRWL). A helical transmembrane segment spans residues 312–336 (GAWWIGFLLSWIFAWSLIIPFSCFP). At 337-377 (KHLPGTAEIQAGKTSQAHQSNSNADVKFGKSIKDFPAALKN) the chain is on the cytoplasmic side. A helical transmembrane segment spans residues 378 to 399 (LMKNAVFMCLVLSTSSEALITT). At 400–419 (GFATFLPKFIENQFGLTSSF) the chain is on the extracellular side. The chain crosses the membrane as a helical span at residues 420–443 (AATLGGAVLIPGAALGQILGGFLV). The Cytoplasmic portion of the chain corresponds to 444 to 447 (SKFR). Residues 448–471 (MTCKNTMKFALFTSGVALTLSFVF) form a helical membrane-spanning segment. Over 472–580 (MYAKCENEPF…ETHCAKLPIF (109 aa)) the chain is Extracellular. The region spanning 495–549 (GNLIAPCNANCNCSRSYYYPVCGDGVQYFSPCFAGCSNPVAHRKPKVYYNCSCIE) is the Kazal-like domain. 3 disulfides stabilise this stretch: Cys501/Cys530, Cys507/Cys526, and Cys516/Cys547. A helical membrane pass occupies residues 581 to 603 (LCIFFIVIIFTFMAGTPITVSIL). The Cytoplasmic portion of the chain corresponds to 604 to 612 (RCVNHRQRS). The helical transmembrane segment at 613–638 (LALGIQFMVLRLLGTIPGPIIFGFTI) threads the bilayer. Residues 639 to 672 (DSTCILWDINDCGIKGACWIYDNIKMAHMLVAIS) lie on the Extracellular side of the membrane. A helical transmembrane segment spans residues 673–690 (VTCKVITMFFNGFAIFLY). Topologically, residues 691–724 (KPPPSATDVSFHKENAVVTNVLAEQDLNKIVKEG) are cytoplasmic.

Belongs to the organo anion transporter (TC 2.A.60) family. As to expression, predominantly expressed in kidney but also weakly expressed in both fetal liver and kidney.

It localises to the basolateral cell membrane. It carries out the reaction estrone 3-sulfate(out) = estrone 3-sulfate(in). The catalysed reaction is L-thyroxine(out) = L-thyroxine(in). It catalyses the reaction 3,3',5-triiodo-L-thyronine(out) = 3,3',5-triiodo-L-thyronine(in). The enzyme catalyses chenodeoxycholate(out) = chenodeoxycholate(in). It carries out the reaction glycocholate(out) = glycocholate(in). The catalysed reaction is L-homoarginine(in) = L-homoarginine(out). It catalyses the reaction L-arginine(in) = L-arginine(out). The enzyme catalyses N(omega),N(omega)-dimethyl-L-arginine(out) = N(omega),N(omega)-dimethyl-L-arginine(in). Functionally, mediates the transport of organic anions such as steroids (estrone 3-sulfate, chenodeoxycholate, glycocholate) and thyroid hormones (3,3',5-triiodo-L-thyronine (T3), L-thyroxine (T4)), in the kidney. Capable of transporting cAMP and pharmacological substances such as digoxin, ouabain and methotrexate. Transport is independent of sodium, chloride ion, and ATP. Transport activity is stimulated by an acidic extracellular environment due to increased substrate affinity to the transporter. The driving force for this transport activity is currently not known. The role of hydrogencarbonate (HCO3(-), bicarbonate) as the probable counteranion that exchanges for organic anions is still not well defined. Functions as an uptake transporter at the apical membrane, suggesting a role in renal reabsorption. Involved in the renal secretion of the uremic toxin ADMA (N(omega),N(omega)-dimethyl-L-arginine or asymmetrical dimethylarginine), which is associated to cardiovascular events and mortality, and the structurally related amino acids L-arginine and L-homoarginine (a cardioprotective biomarker). Can act bidirectionally, suggesting a dual protective role of this transport protein; exporting L-homoarginine after being synthesized in proximal tubule cells, and mediating uptake of ADMA from the blood into proximal tubule cells where it is degraded by the enzyme dimethylarginine dimethylaminohydrolase 1 (DDAH1). May be involved in sperm maturation by enabling directed movement of organic anions and compounds within or between cells. This ion-transporting process is important to maintain the strict epididymal homeostasis necessary for sperm maturation. May have a role in secretory functions since seminal vesicle epithelial cells are assumed to secrete proteins involved in decapacitation by modifying surface proteins to facilitate the acquisition of the ability to fertilize the egg. In Homo sapiens (Human), this protein is Solute carrier organic anion transporter family member 4C1.